The chain runs to 40 residues: Photosystem II reaction center protein J (40 aa).

Residues 8–28 (IPLWIIGTVTGILVIGLVGIF) traverse the membrane as a helical segment.

This sequence belongs to the PsbJ family. As to quaternary structure, PSII is composed of 1 copy each of membrane proteins PsbA, PsbB, PsbC, PsbD, PsbE, PsbF, PsbH, PsbI, PsbJ, PsbK, PsbL, PsbM, PsbT, PsbX, PsbY, PsbZ, Psb30/Ycf12, at least 3 peripheral proteins of the oxygen-evolving complex and a large number of cofactors. It forms dimeric complexes.

The protein localises to the plastid. It localises to the chloroplast thylakoid membrane. One of the components of the core complex of photosystem II (PSII). PSII is a light-driven water:plastoquinone oxidoreductase that uses light energy to abstract electrons from H(2)O, generating O(2) and a proton gradient subsequently used for ATP formation. It consists of a core antenna complex that captures photons, and an electron transfer chain that converts photonic excitation into a charge separation. This chain is Photosystem II reaction center protein J, found in Jasminum nudiflorum (Winter jasmine).